Here is a 260-residue protein sequence, read N- to C-terminus: Proteasome subunit alpha (260 aa).

The protein belongs to the peptidase T1A family. The 20S proteasome core is composed of 14 alpha and 14 beta subunits that assemble into four stacked heptameric rings, resulting in a barrel-shaped structure. The two inner rings, each composed of seven catalytic beta subunits, are sandwiched by two outer rings, each composed of seven alpha subunits. The catalytic chamber with the active sites is on the inside of the barrel. Has a gated structure, the ends of the cylinder being occluded by the N-termini of the alpha-subunits. Is capped at one or both ends by the proteasome regulatory ATPase, PAN.

The protein resides in the cytoplasm. Its activity is regulated as follows. The formation of the proteasomal ATPase PAN-20S proteasome complex, via the docking of the C-termini of PAN into the intersubunit pockets in the alpha-rings, triggers opening of the gate for substrate entry. Interconversion between the open-gate and close-gate conformations leads to a dynamic regulation of the 20S proteasome proteolysis activity. Component of the proteasome core, a large protease complex with broad specificity involved in protein degradation. This chain is Proteasome subunit alpha, found in Thermococcus onnurineus (strain NA1).